The chain runs to 292 residues: Glutamate racemase (292 aa).

Substrate is bound by residues 28–29 and 60–61; these read DS and YG. Catalysis depends on Cys91, which acts as the Proton donor/acceptor. 92–93 is a binding site for substrate; the sequence is NT. Cys200 functions as the Proton donor/acceptor in the catalytic mechanism. 201–202 is a substrate binding site; the sequence is TH.

It belongs to the aspartate/glutamate racemases family.

It catalyses the reaction L-glutamate = D-glutamate. Its pathway is cell wall biogenesis; peptidoglycan biosynthesis. Its function is as follows. Provides the (R)-glutamate required for cell wall biosynthesis. This chain is Glutamate racemase, found in Trichormus variabilis (strain ATCC 29413 / PCC 7937) (Anabaena variabilis).